Reading from the N-terminus, the 353-residue chain is D-alanine--D-alanine ligase (353 aa).

Residues 141–349 (KAAFAAAGLP…LPDLVAQLVH (209 aa)) form the ATP-grasp domain. 176–231 (EAELGYPCFVKPANMGSSVGISKARHRDQLLAGLKEAARHDTRLVVEHGVSARELE) lines the ATP pocket. Mg(2+)-binding residues include Asp-302, Glu-316, and Asn-318.

This sequence belongs to the D-alanine--D-alanine ligase family. Requires Mg(2+) as cofactor. The cofactor is Mn(2+).

The protein resides in the cytoplasm. It carries out the reaction 2 D-alanine + ATP = D-alanyl-D-alanine + ADP + phosphate + H(+). It functions in the pathway cell wall biogenesis; peptidoglycan biosynthesis. Functionally, cell wall formation. The sequence is that of D-alanine--D-alanine ligase from Synechococcus sp. (strain CC9311).